A 177-amino-acid chain; its full sequence is MAELATIARPYAEALFRAAPKGEAAGWAEQVAALGAVAADPVLRQFADSPKVAAQQVFDLVAGVTKQTLVPGVQNLLRAMIENGRLSALPEVAAQFHALVNASSGVSDAIVYSAFPIEPAALADLVATLEKRFGRRLSATVQLEPELIGGVRVVVGDEVLDTSVKARLEHMKVALTA.

Belongs to the ATPase delta chain family. As to quaternary structure, F-type ATPases have 2 components, F(1) - the catalytic core - and F(0) - the membrane proton channel. F(1) has five subunits: alpha(3), beta(3), gamma(1), delta(1), epsilon(1). CF(0) has four main subunits: a(1), b(1), b'(1) and c(10-14). The alpha and beta chains form an alternating ring which encloses part of the gamma chain. F(1) is attached to F(0) by a central stalk formed by the gamma and epsilon chains, while a peripheral stalk is formed by the delta, b and b' chains.

The protein resides in the cell inner membrane. Functionally, f(1)F(0) ATP synthase produces ATP from ADP in the presence of a proton or sodium gradient. F-type ATPases consist of two structural domains, F(1) containing the extramembraneous catalytic core and F(0) containing the membrane proton channel, linked together by a central stalk and a peripheral stalk. During catalysis, ATP synthesis in the catalytic domain of F(1) is coupled via a rotary mechanism of the central stalk subunits to proton translocation. Its function is as follows. This protein is part of the stalk that links CF(0) to CF(1). It either transmits conformational changes from CF(0) to CF(1) or is implicated in proton conduction. The polypeptide is ATP synthase subunit delta (Methylibium petroleiphilum (strain ATCC BAA-1232 / LMG 22953 / PM1)).